The chain runs to 370 residues: Probable phosphoserine aminotransferase (370 aa).

Arginine 45 lines the L-glutamate pocket. Pyridoxal 5'-phosphate is bound by residues 79-80, tryptophan 105, threonine 154, aspartate 175, and glutamine 198; that span reads GT. Lysine 199 is subject to N6-(pyridoxal phosphate)lysine. A pyridoxal 5'-phosphate-binding site is contributed by 240–241; that stretch reads NT.

This sequence belongs to the class-V pyridoxal-phosphate-dependent aminotransferase family. SerC subfamily. As to quaternary structure, homodimer. Requires pyridoxal 5'-phosphate as cofactor.

The catalysed reaction is O-phospho-L-serine + 2-oxoglutarate = 3-phosphooxypyruvate + L-glutamate. It carries out the reaction 4-(phosphooxy)-L-threonine + 2-oxoglutarate = (R)-3-hydroxy-2-oxo-4-phosphooxybutanoate + L-glutamate. The protein operates within amino-acid biosynthesis; L-serine biosynthesis; L-serine from 3-phospho-D-glycerate: step 2/3. It functions in the pathway cofactor biosynthesis; pyridoxine 5'-phosphate biosynthesis; pyridoxine 5'-phosphate from D-erythrose 4-phosphate: step 3/5. In terms of biological role, catalyzes the reversible conversion of 3-phosphohydroxypyruvate to phosphoserine and of 3-hydroxy-2-oxo-4-phosphonooxybutanoate to phosphohydroxythreonine. In Caenorhabditis elegans, this protein is Probable phosphoserine aminotransferase.